The chain runs to 598 residues: Polypeptide N-acetylgalactosaminyltransferase 17 (598 aa).

Topologically, residues 1 to 6 (MASLRR) are cytoplasmic. A helical; Signal-anchor for type II membrane protein membrane pass occupies residues 7–27 (VKVLLVLNLIAVAGFVLFLAK). The Lumenal portion of the chain corresponds to 28–598 (CRPIAVRSGD…QRWTIKNSIK (571 aa)). N50 is a glycosylation site (N-linked (GlcNAc...) asparagine). Cystine bridges form between C142/C373 and C364/C443. A catalytic subdomain A region spans residues 151–262 (LPQISIIFIF…AGWAEPVLSR (112 aa)). Residues D192 and R223 each coordinate substrate. Positions 246, 248, and 378 each coordinate Mn(2+). Positions 319-381 (PIRTPAMIGC…PCSRVAHIER (63 aa)) are catalytic subdomain B. Substrate-binding residues include R381 and Y386. Residues N461 and N486 are each glycosylated (N-linked (GlcNAc...) asparagine). The region spanning 465–594 (AYGELRNNKA…SCTGQRWTIK (130 aa)) is the Ricin B-type lectin domain. Disulfide bonds link C478-C494, C526-C541, and C568-C586.

The protein belongs to the glycosyltransferase 2 family. GalNAc-T subfamily. Mn(2+) is required as a cofactor. In terms of tissue distribution, highly expressed in brain and heart. Weakly expressed in kidney, liver, lung and spleen.

It localises to the golgi apparatus membrane. The catalysed reaction is L-seryl-[protein] + UDP-N-acetyl-alpha-D-galactosamine = a 3-O-[N-acetyl-alpha-D-galactosaminyl]-L-seryl-[protein] + UDP + H(+). The enzyme catalyses L-threonyl-[protein] + UDP-N-acetyl-alpha-D-galactosamine = a 3-O-[N-acetyl-alpha-D-galactosaminyl]-L-threonyl-[protein] + UDP + H(+). Its pathway is protein modification; protein glycosylation. Functionally, may catalyze the initial reaction in O-linked oligosaccharide biosynthesis, the transfer of an N-acetyl-D-galactosamine residue to a serine or threonine residue on the protein receptor. This chain is Polypeptide N-acetylgalactosaminyltransferase 17, found in Homo sapiens (Human).